A 301-amino-acid polypeptide reads, in one-letter code: Light-independent protochlorophyllide reductase iron-sulfur ATP-binding protein (301 aa).

Over residues methionine 1–proline 13 the composition is skewed to low complexity. A disordered region spans residues methionine 1–serine 21. Residues glycine 45–threonine 50 and lysine 74 each bind ATP. Serine 49 is a Mg(2+) binding site. Cysteine 130 and cysteine 164 together coordinate [4Fe-4S] cluster. ATP contacts are provided by residues asparagine 215 to arginine 216 and proline 239 to leucine 241.

The protein belongs to the NifH/BchL/ChlL family. In terms of assembly, homodimer. Protochlorophyllide reductase is composed of three subunits; BchL, BchN and BchB. [4Fe-4S] cluster serves as cofactor.

It catalyses the reaction chlorophyllide a + oxidized 2[4Fe-4S]-[ferredoxin] + 2 ADP + 2 phosphate = protochlorophyllide a + reduced 2[4Fe-4S]-[ferredoxin] + 2 ATP + 2 H2O. Its pathway is porphyrin-containing compound metabolism; bacteriochlorophyll biosynthesis (light-independent). Its function is as follows. Component of the dark-operative protochlorophyllide reductase (DPOR) that uses Mg-ATP and reduced ferredoxin to reduce ring D of protochlorophyllide (Pchlide) to form chlorophyllide a (Chlide). This reaction is light-independent. The L component serves as a unique electron donor to the NB-component of the complex, and binds Mg-ATP. The protein is Light-independent protochlorophyllide reductase iron-sulfur ATP-binding protein of Bradyrhizobium sp. (strain BTAi1 / ATCC BAA-1182).